The primary structure comprises 433 residues: Tol-Pal system protein TolB (433 aa).

Residues 1–21 form the signal peptide; it reads MRNLLRGMLVVICCMAGIVMA.

The protein belongs to the TolB family. In terms of assembly, the Tol-Pal system is composed of five core proteins: the inner membrane proteins TolA, TolQ and TolR, the periplasmic protein TolB and the outer membrane protein Pal. They form a network linking the inner and outer membranes and the peptidoglycan layer.

The protein resides in the periplasm. In terms of biological role, part of the Tol-Pal system, which plays a role in outer membrane invagination during cell division and is important for maintaining outer membrane integrity. This is Tol-Pal system protein TolB from Pseudomonas fluorescens (strain Pf0-1).